A 277-amino-acid chain; its full sequence is S-formylglutathione hydrolase FrmB (277 aa).

Residues serine 145, aspartate 221, and histidine 254 each act as charge relay system in the active site.

This sequence belongs to the esterase D family.

It carries out the reaction S-formylglutathione + H2O = formate + glutathione + H(+). Functionally, serine hydrolase involved in the detoxification of formaldehyde. Hydrolyzes S-formylglutathione to glutathione and formate. This is S-formylglutathione hydrolase FrmB (frmB) from Escherichia coli O9:H4 (strain HS).